The chain runs to 796 residues: Probable phosphoketolase (796 aa).

This sequence belongs to the XFP family. The cofactor is thiamine diphosphate.

The protein is Probable phosphoketolase of Clostridium acetobutylicum (strain ATCC 824 / DSM 792 / JCM 1419 / IAM 19013 / LMG 5710 / NBRC 13948 / NRRL B-527 / VKM B-1787 / 2291 / W).